Reading from the N-terminus, the 411-residue chain is MQIYLVGGAVRDQLLNLPVKDRDYLVVGATPEQLLAQGYQQVGNDFPVFLHPKTKEEYALARQERKNGVGYNGFLCDFSPDVTLEQDLIRRDLTINAIAQDASGQIFDPYGGKQDLANRLLRHISPAFSEDPLRVLRVARFAARFHSLGFKIAPETVKLMQEMTACGELAHLTAERVWLETQKAFATDNPQIYFEVLREIGALAVLFPEFDRLFGVPQPEQHHPEIDSGVHTLLVIEQAKRLAKNAENPTALLWAALCHDLGKGLTEKDILPHHYGHEVKGVKPARELSNRLKVSTDVKDFAILVTEYHTHCHKMAELRPETVLKVFNALDIWRKPQRFCDFLLACEADARGRLGFENREYPQAELAKWYFKVAAQVDVQAVIQDGFEKKAIREELNKRRITAIKIIKPNV.

Positions 8 and 11 each coordinate ATP. CTP contacts are provided by Gly8 and Arg11. Asp21 and Asp23 together coordinate Mg(2+). The ATP site is built by Arg91, Arg137, and Arg140. The CTP site is built by Arg91, Arg137, and Arg140. The 106-residue stretch at 228–333 (SGVHTLLVIE…LKVFNALDIW (106 aa)) folds into the HD domain.

The protein belongs to the tRNA nucleotidyltransferase/poly(A) polymerase family. Bacterial CCA-adding enzyme type 1 subfamily. Monomer. Can also form homodimers and oligomers. Requires Mg(2+) as cofactor. It depends on Ni(2+) as a cofactor.

It catalyses the reaction a tRNA precursor + 2 CTP + ATP = a tRNA with a 3' CCA end + 3 diphosphate. The catalysed reaction is a tRNA with a 3' CCA end + 2 CTP + ATP = a tRNA with a 3' CCACCA end + 3 diphosphate. Functionally, catalyzes the addition and repair of the essential 3'-terminal CCA sequence in tRNAs without using a nucleic acid template. Adds these three nucleotides in the order of C, C, and A to the tRNA nucleotide-73, using CTP and ATP as substrates and producing inorganic pyrophosphate. tRNA 3'-terminal CCA addition is required both for tRNA processing and repair. Also involved in tRNA surveillance by mediating tandem CCA addition to generate a CCACCA at the 3' terminus of unstable tRNAs. While stable tRNAs receive only 3'-terminal CCA, unstable tRNAs are marked with CCACCA and rapidly degraded. The polypeptide is Multifunctional CCA protein (Actinobacillus pleuropneumoniae serotype 5b (strain L20)).